Consider the following 154-residue polypeptide: Large ribosomal subunit protein bL19 (154 aa).

Positions 1–33 (MAADPKDTTVTDENTETAATAEVETVASAPTSP) are disordered. The segment covering 16-27 (ETAATAEVETVA) has biased composition (low complexity).

Belongs to the bacterial ribosomal protein bL19 family.

Functionally, this protein is located at the 30S-50S ribosomal subunit interface and may play a role in the structure and function of the aminoacyl-tRNA binding site. This chain is Large ribosomal subunit protein bL19, found in Parasynechococcus marenigrum (strain WH8102).